A 691-amino-acid chain; its full sequence is Elongation factor G (691 aa).

Residues 6–281 (SRYRNIGIMA…GVVDFLPSPI (276 aa)) form the tr-type G domain. Residues 15 to 22 (AHIDAGKT), 79 to 83 (DTPGH), and 133 to 136 (NKMD) contribute to the GTP site.

Belongs to the TRAFAC class translation factor GTPase superfamily. Classic translation factor GTPase family. EF-G/EF-2 subfamily.

Its subcellular location is the cytoplasm. Its function is as follows. Catalyzes the GTP-dependent ribosomal translocation step during translation elongation. During this step, the ribosome changes from the pre-translocational (PRE) to the post-translocational (POST) state as the newly formed A-site-bound peptidyl-tRNA and P-site-bound deacylated tRNA move to the P and E sites, respectively. Catalyzes the coordinated movement of the two tRNA molecules, the mRNA and conformational changes in the ribosome. The sequence is that of Elongation factor G from Wolbachia pipientis subsp. Culex pipiens (strain wPip).